The chain runs to 492 residues: Zinc finger protein 385B (492 aa).

Matrin-type zinc fingers lie at residues 8-44 (KKLL…VKQL) and 143-173 (ISCN…KLKA). The tract at residues 159-206 (EAHYKGSKHAKKLKAQESPKNKQKSAVAQDSGTKTITSTSTNTTTTTT) is disordered. Over residues 189–206 (SGTKTITSTSTNTTTTTT) the composition is skewed to low complexity. 2 consecutive Matrin-type zinc fingers follow at residues 303–337 (KKLL…LEAR) and 371–401 (FHCE…RVAG). The disordered stretch occupies residues 388 to 420 (QHISSRRHKDRVAGKPTKPKYSPYNKQQRSSSS).

The protein resides in the nucleus. Its function is as follows. May play a role in p53/TP53-mediated apoptosis. The protein is Zinc finger protein 385B (znf385b) of Danio rerio (Zebrafish).